The chain runs to 226 residues: NADH-ubiquinone oxidoreductase chain 6 (226 aa).

5 helical membrane passes run 2-22 (STLGLLLILLGIIITCTFVIL), 28-48 (IYSILNLIVIYGCYASILLTV), 56-76 (IYILVNVGAIAVLFLFIVMMI), 90-110 (YNIYMFVGFIGLIGIMGILIT), and 169-189 (IWFIMACIILLIGMVGVIYIT).

Belongs to the complex I subunit 6 family.

It localises to the mitochondrion membrane. The catalysed reaction is a ubiquinone + NADH + 5 H(+)(in) = a ubiquinol + NAD(+) + 4 H(+)(out). Functionally, core subunit of the mitochondrial membrane respiratory chain NADH dehydrogenase (Complex I) that is believed to belong to the minimal assembly required for catalysis. Complex I functions in the transfer of electrons from NADH to the respiratory chain. The immediate electron acceptor for the enzyme is believed to be ubiquinone. This chain is NADH-ubiquinone oxidoreductase chain 6 (nad6), found in Dictyostelium citrinum (Slime mold).